A 366-amino-acid chain; its full sequence is Putative type II methyltransferase M.MjaORF1200P (366 aa).

Residues 5 to 366 enclose the SAM-dependent MTase C5-type domain; that stretch reads LKFIDLFCGC…IARVIKENLK (362 aa). The active site involves C133.

Belongs to the class I-like SAM-binding methyltransferase superfamily. C5-methyltransferase family.

The enzyme catalyses a 2'-deoxycytidine in DNA + S-adenosyl-L-methionine = a 5-methyl-2'-deoxycytidine in DNA + S-adenosyl-L-homocysteine + H(+). Functionally, a putative methylase that probably protects DNA from cleavage by the MjaORF1200P endonuclease. This chain is Putative type II methyltransferase M.MjaORF1200P, found in Methanocaldococcus jannaschii (strain ATCC 43067 / DSM 2661 / JAL-1 / JCM 10045 / NBRC 100440) (Methanococcus jannaschii).